Reading from the N-terminus, the 570-residue chain is Peptidyl-prolyl cis-trans isomerase-like 2 (570 aa).

The U-box domain occupies 37–110; the sequence is KRLPFNFCSL…GDYVDPVTYK (74 aa). 3 disordered regions span residues 215-253, 428-449, and 469-570; these read RSER…KPTP, STTL…PTPD, and KKAE…SSWD. Low complexity predominate over residues 234–248; it reads STTTSTQSKTASFQS. Residues 298-457 form the PPIase cyclophilin-type domain; the sequence is QKGYARISTT…PDIRITDVTI (160 aa). Residues 428–446 are compositionally biased toward polar residues; sequence STTLNNLETHPVNSSTNRP. Residues 469-483 show a composition bias toward basic and acidic residues; that stretch reads KKAEEASGKNKKVDP. Composition is skewed to acidic residues over residues 484-497 and 535-550; these read TEED…DDDQ and QEED…EPEP.

The protein belongs to the cyclophilin-type PPIase family. PPIL2 subfamily.

The protein localises to the nucleus. It carries out the reaction [protein]-peptidylproline (omega=180) = [protein]-peptidylproline (omega=0). The catalysed reaction is S-ubiquitinyl-[E2 ubiquitin-conjugating enzyme]-L-cysteine + [acceptor protein]-L-lysine = [E2 ubiquitin-conjugating enzyme]-L-cysteine + N(6)-ubiquitinyl-[acceptor protein]-L-lysine.. Its function is as follows. May catalyze the cis-trans isomerization of proline imidic peptide bonds in oligopeptides thereby assisting the folding of proteins. May also function as a chaperone, playing a role in intracellular transport of proteins. May also have a protein ubiquitin ligase activity acting as an E3 ubiquitin protein ligase or as a ubiquitin-ubiquitin ligase promoting elongation of ubiquitin chains on proteins. The sequence is that of Peptidyl-prolyl cis-trans isomerase-like 2 (cyp8) from Aspergillus oryzae (strain ATCC 42149 / RIB 40) (Yellow koji mold).